Consider the following 367-residue polypeptide: F-box only protein 25 (367 aa).

The interaction with beta-actin stretch occupies residues 1-83; the sequence is MPFLGQDWRS…NDTNTQSFYR (83 aa). The F-box domain occupies 226-274; the sequence is LTLSDLPLHMLNNILYRFSDGWDIITLGQVTPTLYMLSEDRQLWKKLCQ.

In terms of assembly, part of a SCF (SKP1-cullin-F-box) protein ligase complex consisting of FBXO25, SKP1, CUL1 and RBX1. Interacts directly with SKP1 and CUL1. Interacts (via C-terminus) with beta-actin (via N-terminus). Expressed in all brain tissue observed.

The protein resides in the nucleus. The protein operates within protein modification; protein ubiquitination. Functionally, substrate-recognition component of the SCF (SKP1-CUL1-F-box protein)-type E3 ubiquitin ligase complex. May play a role in accumulation of expanded polyglutamine (polyQ) protein huntingtin (HTT). In Homo sapiens (Human), this protein is F-box only protein 25 (FBXO25).